The chain runs to 262 residues: Acyl-[acyl-carrier-protein]--UDP-N-acetylglucosamine O-acyltransferase (262 aa).

Belongs to the transferase hexapeptide repeat family. LpxA subfamily. Homotrimer.

It is found in the cytoplasm. It carries out the reaction a (3R)-hydroxyacyl-[ACP] + UDP-N-acetyl-alpha-D-glucosamine = a UDP-3-O-[(3R)-3-hydroxyacyl]-N-acetyl-alpha-D-glucosamine + holo-[ACP]. It functions in the pathway glycolipid biosynthesis; lipid IV(A) biosynthesis; lipid IV(A) from (3R)-3-hydroxytetradecanoyl-[acyl-carrier-protein] and UDP-N-acetyl-alpha-D-glucosamine: step 1/6. Involved in the biosynthesis of lipid A, a phosphorylated glycolipid that anchors the lipopolysaccharide to the outer membrane of the cell. This is Acyl-[acyl-carrier-protein]--UDP-N-acetylglucosamine O-acyltransferase from Yersinia enterocolitica.